We begin with the raw amino-acid sequence, 125 residues long: Large ribosomal subunit protein bL12 (125 aa).

The protein belongs to the bacterial ribosomal protein bL12 family. As to quaternary structure, homodimer. Part of the ribosomal stalk of the 50S ribosomal subunit. Forms a multimeric L10(L12)X complex, where L10 forms an elongated spine to which 2 to 4 L12 dimers bind in a sequential fashion. Binds GTP-bound translation factors.

In terms of biological role, forms part of the ribosomal stalk which helps the ribosome interact with GTP-bound translation factors. Is thus essential for accurate translation. The chain is Large ribosomal subunit protein bL12 from Campylobacter concisus (strain 13826).